The following is a 1056-amino-acid chain: Carbamoyl phosphate synthase large chain (1056 aa).

Residues 1 to 397 (MPRRTDIKKV…GFKKALRSID (397 aa)) form a carboxyphosphate synthetic domain region. The ATP site is built by R127, R167, G173, G174, E206, V208, E213, G239, V240, H241, Q282, and E294. An ATP-grasp 1 domain is found at 131 to 323 (KALMQKIGEP…IARVAAKIAI (193 aa)). Mg(2+) is bound by residues Q282, E294, and N296. Mn(2+)-binding residues include Q282, E294, and N296. The interval 398–530 (TDINTHTNHN…YSTHGVTTDI (133 aa)) is oligomerization domain. The tract at residues 531-919 (IQNDKKKVLI…YKACISADNE (389 aa)) is carbamoyl phosphate synthetic domain. The 192-residue stretch at 661 to 852 (SELLDALKIP…LAKVAAKVMI (192 aa)) folds into the ATP-grasp 2 domain. 10 residues coordinate ATP: R697, S736, L738, E743, G768, V769, H770, S771, Q811, and E823. Residues Q811, E823, and N825 each contribute to the Mg(2+) site. Mn(2+) is bound by residues Q811, E823, and N825. The MGS-like domain occupies 918-1056 (NELPIEGNVF…PISHYLSEVE (139 aa)). The tract at residues 920-1056 (LPIEGNVFIS…PISHYLSEVE (137 aa)) is allosteric domain.

It belongs to the CarB family. As to quaternary structure, composed of two chains; the small (or glutamine) chain promotes the hydrolysis of glutamine to ammonia, which is used by the large (or ammonia) chain to synthesize carbamoyl phosphate. Tetramer of heterodimers (alpha,beta)4. Requires Mg(2+) as cofactor. Mn(2+) is required as a cofactor.

It carries out the reaction hydrogencarbonate + L-glutamine + 2 ATP + H2O = carbamoyl phosphate + L-glutamate + 2 ADP + phosphate + 2 H(+). The catalysed reaction is hydrogencarbonate + NH4(+) + 2 ATP = carbamoyl phosphate + 2 ADP + phosphate + 2 H(+). It functions in the pathway amino-acid biosynthesis; L-arginine biosynthesis; carbamoyl phosphate from bicarbonate: step 1/1. The protein operates within pyrimidine metabolism; UMP biosynthesis via de novo pathway; (S)-dihydroorotate from bicarbonate: step 1/3. Functionally, large subunit of the glutamine-dependent carbamoyl phosphate synthetase (CPSase). CPSase catalyzes the formation of carbamoyl phosphate from the ammonia moiety of glutamine, carbonate, and phosphate donated by ATP, constituting the first step of 2 biosynthetic pathways, one leading to arginine and/or urea and the other to pyrimidine nucleotides. The large subunit (synthetase) binds the substrates ammonia (free or transferred from glutamine from the small subunit), hydrogencarbonate and ATP and carries out an ATP-coupled ligase reaction, activating hydrogencarbonate by forming carboxy phosphate which reacts with ammonia to form carbamoyl phosphate. This Methanosphaerula palustris (strain ATCC BAA-1556 / DSM 19958 / E1-9c) protein is Carbamoyl phosphate synthase large chain.